Consider the following 244-residue polypeptide: Probable septum site-determining protein MinC (244 aa).

It belongs to the MinC family. As to quaternary structure, interacts with MinD and FtsZ.

In terms of biological role, cell division inhibitor that blocks the formation of polar Z ring septums. Rapidly oscillates between the poles of the cell to destabilize FtsZ filaments that have formed before they mature into polar Z rings. Prevents FtsZ polymerization. The sequence is that of Probable septum site-determining protein MinC from Dichelobacter nodosus (strain VCS1703A).